A 932-amino-acid polypeptide reads, in one-letter code: Protocadherin gamma-A6 (932 aa).

The first 29 residues, 1–29 (MAPPQRHPQRSEQVLLLTLLGTLWGAAAA), serve as a signal peptide directing secretion. Cadherin domains follow at residues 30–133 (QIRY…TPRF), 134–242 (LKEE…TPVF), 243–347 (TQPV…VPEV), 348–452 (VVTS…PPTF), 453–562 (PHSS…APEI), and 570–682 (DGST…EPSA). Residues 30-692 (QIRYSIPEEL…KPNDSDLTLY (663 aa)) are Extracellular-facing. N-linked (GlcNAc...) asparagine glycosylation occurs at Asn-81. Asn-419 and Asn-545 each carry an N-linked (GlcNAc...) asparagine glycan. N-linked (GlcNAc...) asparagine glycosylation occurs at Asn-685. The chain crosses the membrane as a helical span at residues 693–713 (LVVAVAAVSCVFLAFVIVLLA). The Cytoplasmic portion of the chain corresponds to 714 to 932 (LRLQRWHKSR…KKKSGKKEKK (219 aa)). Disordered regions lie at residues 803 to 841 (DPRQ…WPNN) and 902 to 932 (ATLT…KEKK). Residues 806–841 (QLQQAPPNTDWRFSQAQRPGTSGSQNGDDTGTWPNN) are compositionally biased toward polar residues. Basic residues predominate over residues 922-932 (NKKKSGKKEKK).

It localises to the cell membrane. Its function is as follows. Potential calcium-dependent cell-adhesion protein. May be involved in the establishment and maintenance of specific neuronal connections in the brain. This chain is Protocadherin gamma-A6 (PCDHGA6), found in Pan troglodytes (Chimpanzee).